Reading from the N-terminus, the 271-residue chain is Mannosyl-3-phosphoglycerate phosphatase (271 aa).

Asp-13 (nucleophile) is an active-site residue. Mg(2+) is bound by residues Asp-13, Asp-15, and Asp-214.

Belongs to the HAD-like hydrolase superfamily. MPGP family. Mg(2+) is required as a cofactor.

It localises to the cytoplasm. It catalyses the reaction 2-O-(alpha-D-mannosyl)-3-phosphoglycerate + H2O = (2R)-2-O-(alpha-D-mannosyl)-glycerate + phosphate. This is Mannosyl-3-phosphoglycerate phosphatase from Escherichia coli (strain K12 / DH10B).